A 217-amino-acid chain; its full sequence is PTB-containing, cubilin and LRP1-interacting protein (217 aa).

One can recognise a PID domain in the interval 60 to 217 (VTYLGKVSTT…ASQELESDDG (158 aa)). Residues 194-217 (KSDGRIHRSSSSEEASQELESDDG) form a disordered region. 3 positions are modified to phosphoserine: Ser-202, Ser-203, and Ser-214. A compositionally biased stretch (acidic residues) spans 208-217 (ASQELESDDG).

As to quaternary structure, found in a complex with PID1/PCLI1, LRP1 and CUBNI. Interacts with LRP1 and CUBN.

It localises to the cytoplasm. Its function is as follows. Increases proliferation of preadipocytes without affecting adipocytic differentiation. The polypeptide is PTB-containing, cubilin and LRP1-interacting protein (Pid1) (Mus musculus (Mouse)).